A 282-amino-acid chain; its full sequence is MTVIDGKALGVKLQAALAEKTARLKEEKGLVPGLVVILVGENPASQVYVRNKERSALAAGFKSEVVRVPDTISESDLLDLIERYNQDDEWHGILVQLPLPAHISEEKVLLAIDPDKDVDGLHPTNMGKFWSGHPVMIPSTPAGIMEMFKEYQIELEGKSALVIGRSNIVGKPMAQLLLDADATVTIAHSRTKNLPDLARQADIVVVAIGRGHFVTKEFVKLGAVVIDVGMNRDENGKLIGDVKYDEVSEVASYITPVPGGVGPMTITMLMEQTYEACVRSAK.

NADP(+) is bound by residues 164-166 and serine 189; that span reads GRS.

Belongs to the tetrahydrofolate dehydrogenase/cyclohydrolase family. As to quaternary structure, homodimer.

The enzyme catalyses (6R)-5,10-methylene-5,6,7,8-tetrahydrofolate + NADP(+) = (6R)-5,10-methenyltetrahydrofolate + NADPH. It carries out the reaction (6R)-5,10-methenyltetrahydrofolate + H2O = (6R)-10-formyltetrahydrofolate + H(+). It functions in the pathway one-carbon metabolism; tetrahydrofolate interconversion. Its function is as follows. Catalyzes the oxidation of 5,10-methylenetetrahydrofolate to 5,10-methenyltetrahydrofolate and then the hydrolysis of 5,10-methenyltetrahydrofolate to 10-formyltetrahydrofolate. In Streptococcus suis (strain 98HAH33), this protein is Bifunctional protein FolD.